We begin with the raw amino-acid sequence, 324 residues long: Quinolinate synthase (324 aa).

Residues H44 and S62 each coordinate iminosuccinate. A [4Fe-4S] cluster-binding site is contributed by C107. Residues Y133 to N135 and S150 each bind iminosuccinate. C192 contacts [4Fe-4S] cluster. Iminosuccinate contacts are provided by residues H218–E220 and T235. C278 contributes to the [4Fe-4S] cluster binding site.

This sequence belongs to the quinolinate synthase family. Type 2 subfamily. [4Fe-4S] cluster serves as cofactor.

Its subcellular location is the cytoplasm. The enzyme catalyses iminosuccinate + dihydroxyacetone phosphate = quinolinate + phosphate + 2 H2O + H(+). Its pathway is cofactor biosynthesis; NAD(+) biosynthesis; quinolinate from iminoaspartate: step 1/1. Functionally, catalyzes the condensation of iminoaspartate with dihydroxyacetone phosphate to form quinolinate. This Leptospira interrogans serogroup Icterohaemorrhagiae serovar copenhageni (strain Fiocruz L1-130) protein is Quinolinate synthase.